The chain runs to 274 residues: 2-succinyl-6-hydroxy-2,4-cyclohexadiene-1-carboxylate synthase (274 aa).

This sequence belongs to the AB hydrolase superfamily. MenH family. Monomer.

It catalyses the reaction 5-enolpyruvoyl-6-hydroxy-2-succinyl-cyclohex-3-ene-1-carboxylate = (1R,6R)-6-hydroxy-2-succinyl-cyclohexa-2,4-diene-1-carboxylate + pyruvate. It functions in the pathway quinol/quinone metabolism; 1,4-dihydroxy-2-naphthoate biosynthesis; 1,4-dihydroxy-2-naphthoate from chorismate: step 3/7. Its pathway is quinol/quinone metabolism; menaquinone biosynthesis. Catalyzes a proton abstraction reaction that results in 2,5-elimination of pyruvate from 2-succinyl-5-enolpyruvyl-6-hydroxy-3-cyclohexene-1-carboxylate (SEPHCHC) and the formation of 2-succinyl-6-hydroxy-2,4-cyclohexadiene-1-carboxylate (SHCHC). The polypeptide is 2-succinyl-6-hydroxy-2,4-cyclohexadiene-1-carboxylate synthase (Yersinia enterocolitica serotype O:8 / biotype 1B (strain NCTC 13174 / 8081)).